We begin with the raw amino-acid sequence, 317 residues long: Lipopolysaccharide heptosyltransferase 1 (317 aa).

Residues Thr187, Thr188, Lys192, Glu222, Met242, Asp261, Thr262, Gly263, and His266 each coordinate ADP-L-glycero-beta-D-manno-heptose.

This sequence belongs to the glycosyltransferase 9 family.

The protein localises to the cell inner membrane. The enzyme catalyses an alpha-Kdo-(2-&gt;4)-alpha-Kdo-(2-&gt;6)-lipid A + ADP-L-glycero-beta-D-manno-heptose = an L-alpha-D-Hep-(1-&gt;5)-[alpha-Kdo-(2-&gt;4)]-alpha-Kdo-(2-&gt;6)-lipid A + ADP + H(+). It participates in bacterial outer membrane biogenesis; LPS core biosynthesis. In terms of biological role, glycosyltransferase involved in the biosynthesis of the core oligosaccharide region of lipopolysaccharide (LPS). Catalyzes the addition of the first heptose unit to one 3-deoxy-D-manno-octulosonic acid (Kdo) residue of the Kdo2-lipid A module. The protein is Lipopolysaccharide heptosyltransferase 1 of Salmonella typhimurium (strain LT2 / SGSC1412 / ATCC 700720).